The primary structure comprises 484 residues: Endoglucanase 3 (484 aa).

An N-terminal signal peptide occupies residues 1–21; it reads MASPFFFVFLLSALSLENTYA. D77 (nucleophile) is an active-site residue. A glycan (N-linked (GlcNAc...) asparagine) is linked at N370. Residues H402, D453, and E462 contribute to the active site.

The protein belongs to the glycosyl hydrolase 9 (cellulase E) family. As to expression, specifically expressed in root cap cells.

It localises to the secreted. The enzyme catalyses Endohydrolysis of (1-&gt;4)-beta-D-glucosidic linkages in cellulose, lichenin and cereal beta-D-glucans.. Its function is as follows. May be involved in the sloughing (cell-cell separation) of the root cap cells from root tip. The polypeptide is Endoglucanase 3 (CEL5) (Arabidopsis thaliana (Mouse-ear cress)).